A 330-amino-acid chain; its full sequence is tRNA U34 carboxymethyltransferase (330 aa).

Carboxy-S-adenosyl-L-methionine-binding positions include lysine 91, tryptophan 105, lysine 110, glycine 130, 152–154 (DPS), 181–182 (IE), methionine 196, tyrosine 200, and arginine 315.

The protein belongs to the class I-like SAM-binding methyltransferase superfamily. CmoB family. As to quaternary structure, homotetramer.

The enzyme catalyses carboxy-S-adenosyl-L-methionine + 5-hydroxyuridine(34) in tRNA = 5-carboxymethoxyuridine(34) in tRNA + S-adenosyl-L-homocysteine + H(+). Functionally, catalyzes carboxymethyl transfer from carboxy-S-adenosyl-L-methionine (Cx-SAM) to 5-hydroxyuridine (ho5U) to form 5-carboxymethoxyuridine (cmo5U) at position 34 in tRNAs. The protein is tRNA U34 carboxymethyltransferase of Shewanella halifaxensis (strain HAW-EB4).